The following is an 880-amino-acid chain: Probable potassium channel AKT5 (880 aa).

The Cytoplasmic portion of the chain corresponds to 1–82; that stretch reads MGIEKRKKMV…PFDPRYRAWD (82 aa). The chain crosses the membrane as a helical span at residues 83 to 103; the sequence is WFLVILVLYTAWASPFEFGFL. Residues 104–111 are Extracellular-facing; it reads QTPRAPLS. The helical transmembrane segment at 112-132 threads the bilayer; the sequence is ILDNVVNGFFAVDIVLTFFVA. The Cytoplasmic segment spans residues 133–153; it reads FLDKATYLLVDDPKRIAWRYT. Residues 154–174 traverse the membrane as a helical segment; sequence STWLIFDVVSTVPYELFGSLL. The Extracellular portion of the chain corresponds to 175–182; it reads HNTIQGYG. Residues 183–203 form a helical; Voltage-sensor membrane-spanning segment; sequence IFSMLRLWRLHRVSKCFARLE. Residues 204–217 lie on the Cytoplasmic side of the membrane; sequence KDRKYNYFWIRCTK. Residues 218 to 238 form a helical membrane-spanning segment; it reads LLLVSLFVVHCGACFCYSIAA. Topologically, residues 239 to 265 are extracellular; it reads HYPDPSMTFMALAEANWKQKSLLIRYV. Positions 266 to 285 form an intramembrane region, pore-forming; that stretch reads TAMYWSITTFSTTGYGDIHG. The Extracellular segment spans residues 286–291; sequence NNAEER. Residues 292–312 form a helical membrane-spanning segment; the sequence is AFILFYMIFNLGLLAYIIGNM. Topologically, residues 313–880 are cytoplasmic; it reads TNLVVHVTSR…GDFLLLLKVS (568 aa). Position 396-517 (396-517) interacts with a nucleoside 3',5'-cyclic phosphate; sequence LFHGISNDLL…IMNNLLQHLK (122 aa). ANK repeat units lie at residues 541–570, 574–603, 607–636, 637–667, and 671–700; these read DLPL…NPNE, NGRT…DPNI, EGSV…TLSF, DTVG…DISL, and NGTT…DMDK. Residues 809 to 880 form the KHA domain; the sequence is VGGVYPARVT…GDFLLLLKVS (72 aa).

The protein belongs to the potassium channel family. Plant (TC 1.A.1.4) subfamily. In terms of assembly, the potassium channel is probably composed of a homo- or heterotetrameric complex of pore-forming subunits. In terms of tissue distribution, predominantly expressed in flowers.

Its subcellular location is the membrane. Its function is as follows. Probable potassium channel. May interact with the cytoskeleton or with regulatory proteins. This Arabidopsis thaliana (Mouse-ear cress) protein is Probable potassium channel AKT5 (AKT5).